A 4650-amino-acid chain; its full sequence is Nonribosomal peptide synthetase lenA (4650 aa).

An adenylation 1 region spans residues 227–628 (GSILDTIRAK…DGSVIHVGRK (402 aa)). The Carrier 1 domain maps to 773–849 (PPETVLEKAL…KLAQYLRNTE (77 aa)). Ser810 bears the O-(pantetheine 4'-phosphoryl)serine mark. The interval 890-1212 (EDCYPCTALQ…CDFQSQLIFQ (323 aa)) is condensation 1. Residues 1288-1622 (ELELNAQKEP…RKIRPGYLGR (335 aa)) are adenylation 2. One can recognise a Carrier 2 domain in the interval 1745–1822 (PPVSAAEKKW…EIAALSETRD (78 aa)). An O-(pantetheine 4'-phosphoryl)serine modification is found at Ser1782. Residues 1850-2110 (ATNLIAATVH…GEKTRPGGGA (261 aa)) are condensation 2. Residues 2183-2511 (RCVHDLVHDA…RTGDLIKLRG (329 aa)) form an adenylation 3 region. The Carrier 3 domain maps to 2630–2708 (APQNRLQHDI…EADVGLDHAS (79 aa)). An O-(pantetheine 4'-phosphoryl)serine modification is found at Ser2667. Positions 2722–2998 (ESMARALAVI…KDARRRSPAN (277 aa)) are epimerase. Positions 3128–3565 (VQDVYPCTPI…VDDSQRQQIL (438 aa)) are condensation 3. An adenylation 4 region spans residues 3578–3980 (CVHHIIHQRC…FVGRKDNQIK (403 aa)). The region spanning 4114–4190 (TPSTPLEAQL…QLAAVLEEGA (77 aa)) is the Carrier 4 domain. Ser4151 carries the O-(pantetheine 4'-phosphoryl)serine modification. Positions 4249-4648 (HMVLTFSQPV…TTTPEKLVAE (400 aa)) are condensation 4.

The protein belongs to the NRP synthetase family. Pantetheine 4'-phosphate is required as a cofactor.

The protein operates within alkaloid biosynthesis. Its function is as follows. Nonribosomal peptide synthetase; part of the gene cluster that mediates the biosynthesis of the ergot alkaloids lentopeptins A and B. Within the pathway, lenA catalyzes the biosynthesis of the Ala-Val-Ala peptide chain, including a cinnamic acid moiety as the starting unit. The release of the peptide from the enzyme is accomplished via a cyclization reaction catalyzed by the terminal condensation-like (Ct) domain of lenA to form the N-acyldiketopiperazine intermediate. The reaction appears to proceed through a nucleophilic attack on the carbonyl carbon by a lone electron pair of the valine amide nitrogen. The phenylalanine ammonia-lyase lenB provides the starter unit for the synthesis of the N-acyldiketopiperazine intermediate by the NRPS lenA, while the cytochrome P450 monooxygenase lenC is involved in the post-NRPS oxidative modification steps to form lentopeptins A and B. The sequence is that of Nonribosomal peptide synthetase lenA from Aspergillus lentulus.